The chain runs to 81 residues: HssA/B-like protein 5 (81 aa).

It belongs to the hssA/B family.

This is HssA/B-like protein 5 (hssl5) from Dictyostelium discoideum (Social amoeba).